Reading from the N-terminus, the 198-residue chain is Lipoprotein signal peptidase (198 aa).

The disordered stretch occupies residues M1–P34. Over residues A12 to P26 the composition is skewed to acidic residues. The next 3 helical transmembrane spans lie at L42–V62, M92–V112, and S120–D140. Residues D155 and D169 contribute to the active site. A helical transmembrane segment spans residues V167–L187.

This sequence belongs to the peptidase A8 family.

Its subcellular location is the cell membrane. It carries out the reaction Release of signal peptides from bacterial membrane prolipoproteins. Hydrolyzes -Xaa-Yaa-Zaa-|-(S,diacylglyceryl)Cys-, in which Xaa is hydrophobic (preferably Leu), and Yaa (Ala or Ser) and Zaa (Gly or Ala) have small, neutral side chains.. It participates in protein modification; lipoprotein biosynthesis (signal peptide cleavage). Its function is as follows. This protein specifically catalyzes the removal of signal peptides from prolipoproteins. The chain is Lipoprotein signal peptidase from Rhodococcus jostii (strain RHA1).